Consider the following 74-residue polypeptide: Large ribosomal subunit protein bL31 (74 aa).

Cys-16, Cys-18, Cys-37, and Cys-40 together coordinate Zn(2+).

Belongs to the bacterial ribosomal protein bL31 family. Type A subfamily. In terms of assembly, part of the 50S ribosomal subunit. The cofactor is Zn(2+).

In terms of biological role, binds the 23S rRNA. The sequence is that of Large ribosomal subunit protein bL31 from Nitrosomonas europaea (strain ATCC 19718 / CIP 103999 / KCTC 2705 / NBRC 14298).